The sequence spans 469 residues: 6-phosphogluconate dehydrogenase, NADP(+)-dependent, decarboxylating (469 aa).

NADP(+) contacts are provided by residues G10–G15, N33–S35, V74–A76, and N102. Substrate contacts are provided by residues N102 and S128–G130. K182 acts as the Proton acceptor in catalysis. Residue H185–N186 participates in substrate binding. The active-site Proton donor is the E189. Residues Y190, K260, R287, R446, and H452 each coordinate substrate.

It belongs to the 6-phosphogluconate dehydrogenase family. In terms of assembly, homodimer.

It catalyses the reaction 6-phospho-D-gluconate + NADP(+) = D-ribulose 5-phosphate + CO2 + NADPH. It participates in carbohydrate degradation; pentose phosphate pathway; D-ribulose 5-phosphate from D-glucose 6-phosphate (oxidative stage): step 3/3. Its function is as follows. Catalyzes the oxidative decarboxylation of 6-phosphogluconate to ribulose 5-phosphate and CO(2), with concomitant reduction of NADP to NADPH. Is the predominant 6-P-gluconate dehydrogenase isoenzyme in B.subtilis during growth on glucose and gluconate. The polypeptide is 6-phosphogluconate dehydrogenase, NADP(+)-dependent, decarboxylating (gndA) (Bacillus subtilis (strain 168)).